The chain runs to 553 residues: Dihydrolipoyllysine-residue acetyltransferase component of pyruvate dehydrogenase complex (553 aa).

Residues 4 to 78 enclose the Lipoyl-binding 1 domain; the sequence is AIEIKVPDIG…SEGSVLVMLE (75 aa). Position 44 is an N6-lipoyllysine (Lys-44). The disordered stretch occupies residues 97–118; that stretch reads AAAAPAPAPAPAAAPAAAPAAG. One can recognise a Lipoyl-binding 2 domain in the interval 122–196; the sequence is TIEVKVPDIG…AEGTLLLILE (75 aa). Residue Lys-162 is modified to N6-lipoyllysine. The Peripheral subunit-binding (PSBD) domain occupies 250-287; sequence HASPSVRKFARELGVDVSRVPGTGPKGRITQEDVQGYV. His-526 is a catalytic residue.

Belongs to the 2-oxoacid dehydrogenase family. Forms a 24-polypeptide structural core with octahedral symmetry. The cofactor is (R)-lipoate.

It catalyses the reaction N(6)-[(R)-dihydrolipoyl]-L-lysyl-[protein] + acetyl-CoA = N(6)-[(R)-S(8)-acetyldihydrolipoyl]-L-lysyl-[protein] + CoA. Its function is as follows. The pyruvate dehydrogenase complex catalyzes the overall conversion of pyruvate to acetyl-CoA and CO(2). It contains multiple copies of three enzymatic components: pyruvate dehydrogenase (E1), dihydrolipoamide acetyltransferase (E2) and lipoamide dehydrogenase (E3). The sequence is that of Dihydrolipoyllysine-residue acetyltransferase component of pyruvate dehydrogenase complex (pdhB) from Cupriavidus necator (strain ATCC 17699 / DSM 428 / KCTC 22496 / NCIMB 10442 / H16 / Stanier 337) (Ralstonia eutropha).